The primary structure comprises 213 residues: MANRENKPVIIGVTGGSGSGKTTVSRAIFEQLHGHSLLMLQEDSYYNDQSDMPFEERIKTNYDHPNAFDTELLVKQLKDLLDWKTIEKPIYDYTEHTRSSEVEKVEPKEVIILEGILVLNDPALRDLMDIKIFVDTDDDIRIIRRIQRDIEERGRSLQSVIDQYKSTVKPMYHQFIEPTKRYADIIVPEGGENQVAIDLLVTKVRDILRKREK.

15–22 (GGSGSGKT) is a binding site for ATP.

The protein belongs to the uridine kinase family.

The protein resides in the cytoplasm. The catalysed reaction is uridine + ATP = UMP + ADP + H(+). It carries out the reaction cytidine + ATP = CMP + ADP + H(+). Its pathway is pyrimidine metabolism; CTP biosynthesis via salvage pathway; CTP from cytidine: step 1/3. The protein operates within pyrimidine metabolism; UMP biosynthesis via salvage pathway; UMP from uridine: step 1/1. The chain is Uridine kinase from Ligilactobacillus salivarius (strain UCC118) (Lactobacillus salivarius).